Here is a 500-residue protein sequence, read N- to C-terminus: MVDVEKMSDAELRAELNVRGANVGPVTGTTRSLYEKKLKKLLSGGAKTPARPTVAKPAPKPTPKSAPAPKSPKSPPARRSIPRAAATAANSTINSTFNRSEIEEMSDSDDDMRDDDDDDEEILSPKSKQSSFRSANSTASSVGRGRPVSSTPNKRLSPVYKPSPVPKNTPRTTSSSSKTTINTTTTRIPSTPRRITSVPGLITDFTPSFSTFGSDRPGATPPRKSIYTSKVSKVLHDLGNTTGEEDDDDEFEGQETSRIIYKTEEPSRRGIVKNAWNKVLGYGFDASKNPGDSYDLRAGASRIRVQKNPRTGKVTVKQTNIFNEAIYFALYVILILFVVLGIAYALTTTHRPKTADFSGYWGVLKAAGRDSLNFFYNYAILPVVSLGIFVVLGAGIYFGHRKYKEAKEQEEAKLYELIERITELIRESSIDGDPYVSQPHVRDVLFPPAKRRSAELARWEQAVKFIDTNESRVATDVLVLPSGNECAVWKWIGNQSQKRW.

In terms of domain architecture, LEM spans methionine 1 to glycine 45. Residues methionine 1–alanine 325 lie on the Nuclear side of the membrane. Residues lysine 39–isoleucine 202 form a disordered region. The span at alanine 46–proline 57 shows a compositional bias: low complexity. The segment covering alanine 58–proline 75 has biased composition (pro residues). A compositionally biased stretch (low complexity) spans alanine 77–alanine 89. Residues glutamate 103 to isoleucine 122 are compositionally biased toward acidic residues. Composition is skewed to low complexity over residues serine 130–serine 141 and asparagine 168–serine 197. The helical transmembrane segment at isoleucine 326 to leucine 346 threads the bilayer. At threonine 347–tyrosine 378 the chain is on the perinuclear space side. The helical transmembrane segment at alanine 379–glycine 399 threads the bilayer. Over histidine 400 to tryptophan 500 the chain is Nuclear.

In terms of assembly, interacts with lmn-1. Interacts (via LEM domain and the C-terminal nuclear domain) with baf-1. As to expression, ubiquitous. High expression in germline and intestine.

Its subcellular location is the nucleus inner membrane. It localises to the nucleus envelope. The protein localises to the chromosome. In terms of biological role, nuclear lamina-associated inner nuclear membrane protein that is involved in cell division, nuclear structure organization, maintenance of nuclear envelope integrity and nuclear envelope reformation after mitosis. In interphase cells, plays a role in anchoring and spatial arrangement of chromosome arms at the nuclear periphery, forming so-called lem-2 subdomains. Both arms of autosomes but only the left arm of the X chromosome are anchored in lem-2 subdomains; sequences bound by lem-2 are mainly repetitive chromosome sequences and inactive genes. Involved in chromosome segregation and cell division, probably via its interaction with the nuclear intermediate filament protein lmn-1, the main component of nuclear lamina. Required to organize the distribution of lmn-1, nuclear pore complexes (NPCs) and chromatin in mitotically active cells. Involved in the nuclear positioning and efficient anchoring of microtubule-organizing centers (MTOCs) to the nuclear envelope during mitosis as well as on maintaining correct nuclear morphology. Contributes to closure of nuclear envelope (NE) holes and prevents excess nuclear membranes after meiosis and mitosis. Together with emr-1, plays a role in baf-1 enrichment at the nuclear envelope in anaphase. Together with emr-1, involved in muscle cell attachment to hypodermal cells, as well as muscle cell location and sarcomere organization. May play a role in radiation-induced DNA damage repair response. The chain is LEM protein 2 (lem-2) from Caenorhabditis elegans.